We begin with the raw amino-acid sequence, 365 residues long: Phosphopantothenate--cysteine ligase CAB2 (365 aa).

The tract at residues 228–250 (QSGDNGKMGANNDTEGTTRTTPD) is disordered. The segment covering 238–248 (NNDTEGTTRTT) has biased composition (polar residues).

It belongs to the PPC synthetase family. In terms of assembly, homodimer.

The protein resides in the cytoplasm. It localises to the nucleus. It carries out the reaction (R)-4'-phosphopantothenate + L-cysteine + CTP = N-[(R)-4-phosphopantothenoyl]-L-cysteine + CMP + diphosphate + H(+). It functions in the pathway cofactor biosynthesis; coenzyme A biosynthesis; CoA from (R)-pantothenate: step 2/5. Catalyzes the first step in the biosynthesis of coenzyme A from vitamin B5, where cysteine is conjugated to 4'-phosphopantothenate to form 4-phosphopantothenoylcysteine. This chain is Phosphopantothenate--cysteine ligase CAB2 (CAB2), found in Saccharomyces cerevisiae (strain ATCC 204508 / S288c) (Baker's yeast).